The sequence spans 164 residues: NADH-quinone oxidoreductase subunit I 2 (164 aa).

2 consecutive 4Fe-4S ferredoxin-type domains span residues 39–71 (IVLTRDPDGQERCVACNLCAAACPVDCIDVVKA) and 81–110 (ESFRINFARCIFCGYCEEACPTSAIQLTPD). 8 residues coordinate [4Fe-4S] cluster: cysteine 51, cysteine 54, cysteine 57, cysteine 61, cysteine 90, cysteine 93, cysteine 96, and cysteine 100.

It belongs to the complex I 23 kDa subunit family. As to quaternary structure, NDH-1 is composed of 14 different subunits. Subunits NuoA, H, J, K, L, M, N constitute the membrane sector of the complex. It depends on [4Fe-4S] cluster as a cofactor.

The protein localises to the cell inner membrane. It catalyses the reaction a quinone + NADH + 5 H(+)(in) = a quinol + NAD(+) + 4 H(+)(out). In terms of biological role, NDH-1 shuttles electrons from NADH, via FMN and iron-sulfur (Fe-S) centers, to quinones in the respiratory chain. The immediate electron acceptor for the enzyme in this species is believed to be ubiquinone. Couples the redox reaction to proton translocation (for every two electrons transferred, four hydrogen ions are translocated across the cytoplasmic membrane), and thus conserves the redox energy in a proton gradient. The protein is NADH-quinone oxidoreductase subunit I 2 of Cereibacter sphaeroides (strain ATCC 17023 / DSM 158 / JCM 6121 / CCUG 31486 / LMG 2827 / NBRC 12203 / NCIMB 8253 / ATH 2.4.1.) (Rhodobacter sphaeroides).